Consider the following 280-residue polypeptide: 4-diphosphocytidyl-2-C-methyl-D-erythritol kinase (280 aa).

The active site involves lysine 8. 91 to 101 contacts ATP; it reads PVAAGLAGGST. Residue aspartate 133 is part of the active site.

It belongs to the GHMP kinase family. IspE subfamily.

It catalyses the reaction 4-CDP-2-C-methyl-D-erythritol + ATP = 4-CDP-2-C-methyl-D-erythritol 2-phosphate + ADP + H(+). It participates in isoprenoid biosynthesis; isopentenyl diphosphate biosynthesis via DXP pathway; isopentenyl diphosphate from 1-deoxy-D-xylulose 5-phosphate: step 3/6. Catalyzes the phosphorylation of the position 2 hydroxy group of 4-diphosphocytidyl-2C-methyl-D-erythritol. The sequence is that of 4-diphosphocytidyl-2-C-methyl-D-erythritol kinase from Clostridium botulinum (strain 657 / Type Ba4).